The primary structure comprises 341 residues: Ribosomal RNA small subunit methyltransferase H (341 aa).

S-adenosyl-L-methionine is bound by residues 47-49 (GGY), D64, F91, D109, and Q116.

The protein belongs to the methyltransferase superfamily. RsmH family.

Its subcellular location is the cytoplasm. It carries out the reaction cytidine(1402) in 16S rRNA + S-adenosyl-L-methionine = N(4)-methylcytidine(1402) in 16S rRNA + S-adenosyl-L-homocysteine + H(+). Specifically methylates the N4 position of cytidine in position 1402 (C1402) of 16S rRNA. This chain is Ribosomal RNA small subunit methyltransferase H, found in Rhizobium etli (strain ATCC 51251 / DSM 11541 / JCM 21823 / NBRC 15573 / CFN 42).